The chain runs to 79 residues: RNA-binding protein Hfq (79 aa).

The Sm domain occupies 10 to 70; it reads DVFLNTVRKQ…ISTIMPGQPV (61 aa).

This sequence belongs to the Hfq family. Homohexamer.

In terms of biological role, RNA chaperone that binds small regulatory RNA (sRNAs) and mRNAs to facilitate mRNA translational regulation in response to envelope stress, environmental stress and changes in metabolite concentrations. Also binds with high specificity to tRNAs. This is RNA-binding protein Hfq from Bartonella tribocorum (strain CIP 105476 / IBS 506).